Consider the following 358-residue polypeptide: Protein Wnt-8 (358 aa).

A signal peptide spans 1-22 (MQNTTLFILATLLIFCPFFTAS). C55 and C66 are disulfide-bonded. N-linked (GlcNAc...) asparagine glycosylation is present at N104. 10 cysteine pairs are disulfide-bonded: C105/C113, C115/C133, C181/C195, C183/C190, C260/C298, C276/C291, C295/C337, C313/C328, C315/C325, and C320/C321. S187 carries the O-palmitoleoyl serine lipid modification. Residues N263 and N282 are each glycosylated (N-linked (GlcNAc...) asparagine).

It belongs to the Wnt family. Homooligomer; disulfide-linked, leading to inactivation. Interacts with the long chain of cer1. In terms of processing, palmitoleoylation is required for efficient binding to frizzled receptors. Depalmitoleoylation leads to Wnt signaling pathway inhibition. Proteolytic processing by tiki1 and tiki2 promotes oxidation and formation of large disulfide-bond oligomers, leading to inactivation of wnt8.

It localises to the secreted. Its subcellular location is the extracellular space. The protein resides in the extracellular matrix. Its function is as follows. Ligand for members of the frizzled family of seven transmembrane receptors. Plays a role in ventral mesodermal patterning during embryogenesis. Mimics Nieuwkoop center activity. Causes dorsal mesodermal differentiation of animal cap ectoderm when coexpressed with noggin and nuclear, sequence-specific DNA-binding protein xBra. None of these molecules causes dorsal mesoderm formation when expressed alone. The polypeptide is Protein Wnt-8 (wnt8) (Xenopus laevis (African clawed frog)).